The chain runs to 102 residues: Small ribosomal subunit protein uS10 (102 aa).

This sequence belongs to the universal ribosomal protein uS10 family. As to quaternary structure, part of the 30S ribosomal subunit.

Functionally, involved in the binding of tRNA to the ribosomes. The sequence is that of Small ribosomal subunit protein uS10 from Rhizobium etli (strain CIAT 652).